We begin with the raw amino-acid sequence, 181 residues long: Cyclic AMP-dependent transcription factor ATF-3 (181 aa).

Residue K78 forms a Glycyl lysine isopeptide (Lys-Gly) (interchain with G-Cter in SUMO2) linkage. In terms of domain architecture, bZIP spans D86 to H149. A basic motif region spans residues R88–K110. Positions L114–L142 are leucine-zipper. T162 carries the post-translational modification Phosphothreonine. A Glycyl lysine isopeptide (Lys-Gly) (interchain with G-Cter in SUMO2) cross-link involves residue K175.

It belongs to the bZIP family. ATF subfamily. In terms of assembly, binds DNA as a homodimer or a heterodimer. Interacts with KAT5; promoting KAT5 autoacetylation and KAT5 deubiquitination by USP7.

The protein resides in the nucleus. In terms of biological role, this protein binds the cAMP response element (CRE) (consensus: 5'-GTGACGT[AC][AG]-3'), a sequence present in many viral and cellular promoters. Represses transcription from promoters with ATF sites. It may repress transcription by stabilizing the binding of inhibitory cofactors at the promoter. Its function is as follows. Activates transcription presumably by sequestering inhibitory cofactors away from the promoters. Stress-induced isoform, counteracts the transcriptional repression of isoform 1. This Homo sapiens (Human) protein is Cyclic AMP-dependent transcription factor ATF-3.